The sequence spans 410 residues: MAARRSLRYSGDPGAKRSRNTLGSTNSRKQKAGQKPKRKDVFDFPNTSDVSSMLRELEEEEPYETFDPPLHSTAIYTDDELYKHCVSSTSPATHRGKESRNLNPSENEASGNDSIKLSAKKPRRKLEPISDESDSSEDNVRRSVSIERPRARKPPAAPAAASSSSSPSERPAEQVTPRKTSFPQPSAVEETPAAQSQLKTQKKVRPSPGRRKRPRRGSTHSDASESMHILCLEGKRQSDVMELDVVLSAFERTFLDYKQRVESESCNQAISKFYFKIKGELIRMLKEVQMLKALKRKNTKIISNMEKKRQRLIDVQDELIRLEPQLKQLQTKYDDLKKRKSALKNSKHFLSNLKQLYQDYSNVREEEPKEKEKYDSSSLPALLFKARSILGAEKHLKTINYHLGKLLKQD.

The tract at residues 1–72 is disordered; it reads MAARRSLRYS…YETFDPPLHS (72 aa). The Nuclear localization signal motif lies at 4–21; it reads RRSLRYSGDPGAKRSRNT. The span at 28–38 shows a compositional bias: basic residues; the sequence is RKQKAGQKPKR. Thr73 is modified (phosphothreonine; by PLK1). Residues 87–228 are disordered; sequence SSTSPATHRG…THSDASESMH (142 aa). Residues 101 to 115 show a composition bias toward polar residues; sequence NLNPSENEASGNDSI. A phosphoserine mark is found at Ser105, Ser110, Ser114, Ser130, Ser133, and Ser135. Residues 138-149 show a composition bias toward basic and acidic residues; it reads DNVRRSVSIERP. Over residues 158-169 the composition is skewed to low complexity; it reads PAAASSSSSPSE. Residue Lys179 forms a Glycyl lysine isopeptide (Lys-Gly) (interchain with G-Cter in SUMO2) linkage. Ser186 is modified (phosphoserine). The residue at position 191 (Thr191) is a Phosphothreonine. Positions 200 to 218 are enriched in basic residues; that stretch reads TQKKVRPSPGRRKRPRRGS. At Ser224 the chain carries Phosphoserine. Residues 289–352 adopt a coiled-coil conformation; that stretch reads QMLKALKRKN…LKNSKHFLSN (64 aa). A Nuclear localization signal motif is present at residues 295–312; the sequence is KRKNTKIISNMEKKRQRL.

It belongs to the CENP-U/AME1 family. Component of the CENPA-NAC complex, at least composed of CENPA, CENPC, CENPH, CENPM, CENPN, CENPT and CENPU. The CENPA-NAC complex interacts with the CENPA-CAD complex, composed of CENPI, CENPK, CENPL, CENPO, CENPP, CENPQ, CENPR and CENPS. Interacts with MLF1. Phosphorylated by PLK1 at Thr-73, creating a self-tethering site that specifically interacts with the polo-box domain of PLK1. Expressed at high levels in glioblastoma cell lines. Up-regulated in GBM (glioblastoma multiforme) tumors. Significantly increased in both the tumor core as well as the contralateral striatum and cortex in gliomas.

Its subcellular location is the cytoplasm. The protein localises to the nucleus. The protein resides in the chromosome. It localises to the centromere. It is found in the kinetochore. Its function is as follows. Component of the CENPA-NAC (nucleosome-associated) complex, a complex that plays a central role in assembly of kinetochore proteins, mitotic progression and chromosome segregation. The CENPA-NAC complex recruits the CENPA-CAD (nucleosome distal) complex and may be involved in incorporation of newly synthesized CENPA into centromeres. Plays an important role in the correct PLK1 localization to the mitotic kinetochores. A scaffold protein responsible for the initial recruitment and maintenance of the kinetochore PLK1 population until its degradation. Involved in transcriptional repression. The polypeptide is Centromere protein U (Cenpu) (Rattus norvegicus (Rat)).